Reading from the N-terminus, the 432-residue chain is Amino-acid acetyltransferase (432 aa).

Positions 286 to 425 constitute an N-acetyltransferase domain; sequence ELVREAAIED…ASLYNYQRNS (140 aa).

This sequence belongs to the acetyltransferase family. ArgA subfamily.

It localises to the cytoplasm. It catalyses the reaction L-glutamate + acetyl-CoA = N-acetyl-L-glutamate + CoA + H(+). It functions in the pathway amino-acid biosynthesis; L-arginine biosynthesis; N(2)-acetyl-L-ornithine from L-glutamate: step 1/4. The protein is Amino-acid acetyltransferase of Pseudomonas fluorescens (strain Pf0-1).